The following is a 243-amino-acid chain: DNA repair protein RecO (243 aa).

The protein belongs to the RecO family.

Involved in DNA repair and RecF pathway recombination. This chain is DNA repair protein RecO, found in Phenylobacterium zucineum (strain HLK1).